The chain runs to 520 residues: Dihydropyrimidinase 2 (520 aa).

Zn(2+) contacts are provided by histidine 59, histidine 61, and lysine 152. Lysine 152 is modified (N6-carboxylysine). Tyrosine 157 lines the substrate pocket. Positions 185 and 241 each coordinate Zn(2+). Serine 291 lines the substrate pocket. Aspartate 319 is a Zn(2+) binding site. Asparagine 340 contributes to the substrate binding site.

Belongs to the metallo-dependent hydrolases superfamily. Hydantoinase/dihydropyrimidinase family. Homotetramer. Requires Zn(2+) as cofactor. Post-translationally, carboxylation allows a single lysine to coordinate two zinc ions. In terms of tissue distribution, body wall muscles.

The enzyme catalyses 5,6-dihydrouracil + H2O = 3-(carbamoylamino)propanoate + H(+). The protein is Dihydropyrimidinase 2 (dhp-2) of Caenorhabditis elegans.